The sequence spans 430 residues: tRNA(Ile)-lysidine synthase (430 aa).

ATP is bound at residue 24-29 (SGGLDS).

It belongs to the tRNA(Ile)-lysidine synthase family.

It is found in the cytoplasm. It carries out the reaction cytidine(34) in tRNA(Ile2) + L-lysine + ATP = lysidine(34) in tRNA(Ile2) + AMP + diphosphate + H(+). Ligates lysine onto the cytidine present at position 34 of the AUA codon-specific tRNA(Ile) that contains the anticodon CAU, in an ATP-dependent manner. Cytidine is converted to lysidine, thus changing the amino acid specificity of the tRNA from methionine to isoleucine. The protein is tRNA(Ile)-lysidine synthase of Haemophilus influenzae (strain ATCC 51907 / DSM 11121 / KW20 / Rd).